Reading from the N-terminus, the 198-residue chain is Integrator complex subunit 8-like protein (198 aa).

The protein belongs to the Integrator subunit 8 family. In terms of assembly, component of the Integrator complex. The core complex associates with protein phosphatase 2A subunits, to form the Integrator-PP2A (INTAC) complex.

The protein localises to the nucleus. The protein resides in the chromosome. Component of the integrator complex, a multiprotein complex that terminates RNA polymerase II (Pol II) transcription in the promoter-proximal region of genes. The integrator complex provides a quality checkpoint during transcription elongation by driving premature transcription termination of transcripts that are unfavorably configured for transcriptional elongation: the complex terminates transcription by (1) catalyzing dephosphorylation of the C-terminal domain (CTD) of Pol II subunit polr2a, (2) degrading the exiting nascent RNA transcript via endonuclease activity and (3) promoting the release of Pol II from bound DNA. The integrator complex is also involved in terminating the synthesis of non-coding Pol II transcripts, such as enhancer RNAs (eRNAs), small nuclear RNAs (snRNAs), telomerase RNAs and long non-coding RNAs (lncRNAs). Within the integrator complex, INTS8 is required for the recruitment of protein phosphatase 2A (PP2A) to transcription pause-release checkpoint. The polypeptide is Integrator complex subunit 8-like protein (Dictyostelium discoideum (Social amoeba)).